The sequence spans 175 residues: Bifunctional protein PyrR (175 aa).

Residues 40–41, 102–110, Arg135, and Val159 contribute to the substrate site; these read TR and DDVLYTGRT. The PRPP-binding signature appears at 98-110; that stretch reads VVIIDDVLYTGRT.

The protein belongs to the purine/pyrimidine phosphoribosyltransferase family. PyrR subfamily. Homodimer and homohexamer; in equilibrium.

The catalysed reaction is UMP + diphosphate = 5-phospho-alpha-D-ribose 1-diphosphate + uracil. In terms of biological role, regulates transcriptional attenuation of the pyrimidine nucleotide (pyr) operon by binding in a uridine-dependent manner to specific sites on pyr mRNA. This disrupts an antiterminator hairpin in the RNA and favors formation of a downstream transcription terminator, leading to a reduced expression of downstream genes. Also displays a weak uracil phosphoribosyltransferase activity which is not physiologically significant. The polypeptide is Bifunctional protein PyrR (Staphylococcus epidermidis (strain ATCC 12228 / FDA PCI 1200)).